The sequence spans 288 residues: Anthranilate synthase beta subunit 1, chloroplastic (288 aa).

Residues 1–58 constitute a chloroplast transit peptide; the sequence is MACSHLAAAAAAASPAAARSPAASSAATASAFARLSATPRVASGGLAVRGQRGVAAVV. The Glutamine amidotransferase type-1 domain occupies 83 to 282; sequence PIIVIDNYDS…VRFIEELEKQ (200 aa). L-glutamine is bound at residue 134-136; it reads GPG. The active-site Nucleophile is cysteine 161. Residues glutamine 165 and 215 to 216 contribute to the L-glutamine site; that span reads SL. Residues histidine 256 and glutamate 258 contribute to the active site.

Heterotetramer consisting of two non-identical subunits: a beta subunit and a large alpha subunit. In terms of tissue distribution, expressed in roots and leaves.

It localises to the plastid. The protein resides in the chloroplast. The catalysed reaction is chorismate + L-glutamine = anthranilate + pyruvate + L-glutamate + H(+). It functions in the pathway amino-acid biosynthesis; L-tryptophan biosynthesis; L-tryptophan from chorismate: step 1/5. Part of a heterotetrameric complex that catalyzes the two-step biosynthesis of anthranilate, an intermediate in the biosynthesis of L-tryptophan. In the first step, the glutamine-binding beta subunit of anthranilate synthase (AS) provides the glutamine amidotransferase activity which generates ammonia as a substrate that, along with chorismate, is used in the second step, catalyzed by the large alpha subunit of AS to produce anthranilate. In Oryza sativa subsp. japonica (Rice), this protein is Anthranilate synthase beta subunit 1, chloroplastic.